The chain runs to 3317 residues: Cadherin-23 (3317 aa).

The N-terminal stretch at 1-23 (MRHPPVTWCAMLWLLMLVSGSWG) is a signal peptide. Topologically, residues 24–3062 (QVNRLPFFTN…SVQLPDDMSA (3039 aa)) are extracellular. Cadherin domains are found at residues 34 to 132 (HFFD…APTF), 133 to 236 (HNQP…DPIF), 237 to 348 (INLP…APEF), 349 to 458 (NSSE…RPIF), 459 to 559 (SQPL…VPTF), 560 to 669 (QKDA…PPTF), 670 to 782 (SKPA…APYY), 777 to 888 (KDAP…DPTF), 889 to 993 (QNLP…TPTF), 994 to 1100 (FPAV…RPIF), 1101 to 1206 (LQSS…APVF), 1208 to 1311 (QQQY…AVQF), 1312 to 1416 (SNAS…SPRF), 1418 to 1525 (FTSD…PPVI), 1527 to 1632 (SPFG…APVF), 1633 to 1742 (QQPH…VPTF), 1743 to 1849 (PRDY…DPVL), 1850 to 1957 (LNLP…HPLF), 1958 to 2067 (TEGT…WPTF), 2068 to 2172 (SPPA…RPEF), 2173 to 2291 (LNPI…TPQF), 2295 to 2400 (GITY…NPIF), 2401 to 2507 (DQLS…RPQF), 2508 to 2609 (SKPQ…RPVF), 2612 to 2720 (PPNG…EPLF), 2727 to 2844 (SPQY…PPRF), and 2845 to 2973 (TKAE…EEEF). N-linked (GlcNAc...) asparagine glycosylation is found at Asn155 and Asn206. N-linked (GlcNAc...) asparagine glycosylation is found at Asn349, Asn391, Asn432, Asn464, Asn470, Asn600, Asn692, Asn763, Asn808, Asn825, Asn939, Asn999, Asn1016, Asn1169, Asn1280, Asn1313, Asn1471, Asn1532, Asn1649, Asn1665, Asn1816, Asn1855, Asn1887, Asn1900, Asn2012, Asn2048, Asn2127, Asn2166, Asn2193, Asn2261, Asn2355, and Asn2367. 8 N-linked (GlcNAc...) asparagine glycosylation sites follow: Asn2576, Asn2614, Asn2747, Asn2806, Asn2875, Asn2894, Asn2939, and Asn2979. The chain crosses the membrane as a helical span at residues 3063-3083 (LQMAIIVLAILLFLAAMLFVL). Residues 3084 to 3317 (MNWYYRTIHK…MESPLEITEL (234 aa)) are Cytoplasmic-facing.

Antiparallel heterodimer with PCDH15. Interacts with USH1C and USH1G.

It is found in the cell membrane. Functionally, cadherins are calcium-dependent cell adhesion proteins. They preferentially interact with themselves in a homophilic manner in connecting cells. CDH23 is required for establishing and/or maintaining the proper organization of the stereocilia bundle of hair cells in the cochlea and the vestibule during late embryonic/early postnatal development. It is part of the functional network formed by USH1C, USH1G, CDH23 and MYO7A that mediates mechanotransduction in cochlear hair cells. Required for normal hearing. The polypeptide is Cadherin-23 (Cdh23) (Rattus norvegicus (Rat)).